The sequence spans 111 residues: Large ribosomal subunit protein uL22 (111 aa).

The protein belongs to the universal ribosomal protein uL22 family. As to quaternary structure, part of the 50S ribosomal subunit.

Functionally, this protein binds specifically to 23S rRNA; its binding is stimulated by other ribosomal proteins, e.g. L4, L17, and L20. It is important during the early stages of 50S assembly. It makes multiple contacts with different domains of the 23S rRNA in the assembled 50S subunit and ribosome. The globular domain of the protein is located near the polypeptide exit tunnel on the outside of the subunit, while an extended beta-hairpin is found that lines the wall of the exit tunnel in the center of the 70S ribosome. The protein is Large ribosomal subunit protein uL22 of Mycoplasma capricolum subsp. capricolum (strain California kid / ATCC 27343 / NCTC 10154).